A 229-amino-acid polypeptide reads, in one-letter code: Transmembrane emp24 domain-containing protein 5 (229 aa).

An N-terminal signal peptide occupies residues 1-27 (MGVRMWLPFPMLLLSALPATLLSGAAG). Topologically, residues 28–196 (FTPSLDSDFT…IQESNFDRVN (169 aa)) are lumenal. The GOLD domain occupies 45–126 (KECFYQPMPL…EKVIFFELIL (82 aa)). Residues 197 to 217 (FWSVVNLMVMVVVSAIQVYTL) traverse the membrane as a helical segment. The Cytoplasmic segment spans residues 218 to 229 (KSLFEDKRKSRT).

The protein belongs to the EMP24/GP25L family. As to quaternary structure, interacts with TMED9 and TMED10.

It localises to the endoplasmic reticulum membrane. It is found in the golgi apparatus. Its subcellular location is the cis-Golgi network membrane. The protein localises to the endoplasmic reticulum-Golgi intermediate compartment membrane. In terms of biological role, potential role in vesicular protein trafficking, mainly in the early secretory pathway. Required for the maintenance of the Golgi apparatus; involved in protein exchange between Golgi stacks during assembly. Probably not required for COPI-vesicle-mediated retrograde transport. The sequence is that of Transmembrane emp24 domain-containing protein 5 (Tmed5) from Rattus norvegicus (Rat).